A 155-amino-acid chain; its full sequence is Ribosomal RNA large subunit methyltransferase H (155 aa).

S-adenosyl-L-methionine contacts are provided by residues Gly-104 and 123-128 (LSAMTF).

This sequence belongs to the RNA methyltransferase RlmH family. Homodimer.

The protein resides in the cytoplasm. The catalysed reaction is pseudouridine(1915) in 23S rRNA + S-adenosyl-L-methionine = N(3)-methylpseudouridine(1915) in 23S rRNA + S-adenosyl-L-homocysteine + H(+). Its function is as follows. Specifically methylates the pseudouridine at position 1915 (m3Psi1915) in 23S rRNA. The sequence is that of Ribosomal RNA large subunit methyltransferase H from Oleidesulfovibrio alaskensis (strain ATCC BAA-1058 / DSM 17464 / G20) (Desulfovibrio alaskensis).